A 390-amino-acid polypeptide reads, in one-letter code: MSLFNDKVAKLLAGHEALLMRKNEPVEEGNGVITRYRYPVLTAAHTPVFWRYDLNEETNPFLMERIGMNATLNAGAIKWDGKYLMLVRVEGADRKSFFAVAESPNGIDNFRFWEYPVTLPEDVVPATNVYDMRLTAHEDGWIYGIFCAERHDDNAPIGDLSSATATAGIARTKDLKNWERLPDLKTKSQQRNVVLHPEFVDGKYALYTRPQDGFIDTGSGGGIGWALIDDITHAEVGEEKIIDKRYYHTIKEVKNGEGPHPIKTPQGWLHLAHGVRNCAAGLRYVLYMYMTSLDDPTRLIASPAGYFMAPVGEERIGDVSNVLFSNGWIADDDGKVFIYYASSDTRMHVATSTIERLVDYCLHTPQDGFSSSASVEILKNLIERNLRLMK.

It belongs to the glycosyl hydrolase 130 family.

It catalyses the reaction 4-O-beta-D-mannopyranosyl-D-glucopyranose + phosphate = alpha-D-mannose 1-phosphate + D-glucose. Its function is as follows. Converts 4-O-beta-D-mannopyranosyl-D-glucopyranose (Man-Glc) to mannose 1-phosphate (Man1P) and glucose. Involved in a mannan catabolic pathway which feeds into glycolysis. The polypeptide is 4-O-beta-D-mannosyl-D-glucose phosphorylase (Bacteroides fragilis (strain ATCC 25285 / DSM 2151 / CCUG 4856 / JCM 11019 / LMG 10263 / NCTC 9343 / Onslow / VPI 2553 / EN-2)).